A 1296-amino-acid polypeptide reads, in one-letter code: ABC transporter B family member 21 (1296 aa).

The disordered stretch occupies residues 1–59 (MDSVIESEEGLKVDSPNRADAETSNSKIHEEDEKELKTESDLKEEKKKTEKNKQEEDEK). A compositionally biased stretch (basic and acidic residues) spans 9–59 (EGLKVDSPNRADAETSNSKIHEEDEKELKTESDLKEEKKKTEKNKQEEDEK). Residues 77–97 (IILMILGTIGAVGNGLGFPIM) form a helical membrane-spanning segment. The ABC transmembrane type-1 1 domain maps to 80–368 (MILGTIGAVG…ASPCLSAFAA (289 aa)). N-linked (GlcNAc...) asparagine glycosylation is present at asparagine 113. A run of 5 helical transmembrane segments spans residues 128 to 148 (FVYLGLGTLVAALLQVSGWMI), 205 to 225 (IQLVSTFIGGFVIAFTEGWLL), 227 to 247 (LVMVSSIPLLVMSGAALAIVI), 307 to 327 (GLGLGTLNIVIFCTYALAVWY), and 336 to 356 (GYTGGQVLIIIFAVLTGSMSL). The ABC transporter 1 domain occupies 403-639 (IELNNVNFSY…PEGAYSQLIR (237 aa)). An N-linked (GlcNAc...) asparagine glycan is attached at asparagine 409. ATP is bound at residue 438-445 (GQSGSGKS). 3 N-linked (GlcNAc...) asparagine glycosylation sites follow: asparagine 505, asparagine 519, and asparagine 590. Residues 640–662 (LQEDTKQTEDSTDEQKLSMESMK) are compositionally biased toward basic and acidic residues. The segment at 640-672 (LQEDTKQTEDSTDEQKLSMESMKRSSLRKSSLS) is disordered. 2 positions are modified to phosphoserine: serine 657 and serine 660. The ABC transmembrane type-1 2 domain maps to 730–1017 (LILGSIAAVL…SSSLSPDSSK (288 aa)). 2 helical membrane passes run 731–751 (ILGSIAAVLNGVILPIFGILI) and 774–794 (IIFMLLGVASMVVFPAQTIFF). An N-linked (GlcNAc...) asparagine glycan is attached at asparagine 826. A run of 3 helical transmembrane segments spans residues 865–885 (VIAFVASWQLAFIVLAMLPLI), 952–972 (GIVSGIGFGVSFFVLFSSYAA), and 986–1006 (TTFDSVFRVFFALTMAAVAIS). The ABC transporter 2 domain maps to 1052–1289 (IELRHISFKY…KDGVYASLVQ (238 aa)). 1087–1094 (GESGSGKS) is a binding site for ATP. 2 N-linked (GlcNAc...) asparagine glycosylation sites follow: asparagine 1141 and asparagine 1240.

It belongs to the ABC transporter superfamily. ABCB family. Multidrug resistance exporter (TC 3.A.1.201) subfamily.

It is found in the membrane. This chain is ABC transporter B family member 21 (ABCB21), found in Arabidopsis thaliana (Mouse-ear cress).